The chain runs to 1988 residues: Sodium channel protein type 9 subunit alpha (1988 aa).

The Cytoplasmic portion of the chain corresponds to 1 to 125 (MAMLPPPGPQ…RRISIKILVH (125 aa)). A compositionally biased stretch (basic and acidic residues) spans 26–39 (RIAERKSKEPKEEK). Positions 26–55 (RIAERKSKEPKEEKKDDDEEAPKPSSDLEA) are disordered. The I repeat unit spans residues 112–410 (FSPLRRISIK…VAMAYEEQNQ (299 aa)). The chain crosses the membrane as a helical span at residues 126–145 (SLFSMLIMCTILTNCIFMTM). At 146–150 (NNPPD) the chain is on the extracellular side. The helical transmembrane segment at 151-172 (WTKNVEYTFTGIYTFESLVKIL) threads the bilayer. The Cytoplasmic portion of the chain corresponds to 173-185 (ARGFCVGEFTFLR). The chain crosses the membrane as a helical span at residues 186–204 (DPWNWLDFVVIVFAYLTEF). Residues 205–210 (VNLGNV) are Extracellular-facing. The N-linked (GlcNAc...) asparagine glycan is linked to asparagine 209. A helical membrane pass occupies residues 211–227 (SALRTFRVLRALKTISV). The Cytoplasmic segment spans residues 228-241 (IPGLKTIVGALIQS). A helical membrane pass occupies residues 242–267 (VKKLSDVMILTVFCLSVFALIGLQLF). At 268–346 (MGNLKHKCFR…PDYGYTSFDT (79 aa)) the chain is on the extracellular side. Cysteines 275 and 324 form a disulfide. An N-linked (GlcNAc...) asparagine glycan is attached at asparagine 283. The pore-forming intramembrane region spans 347–363 (FSWAFLALFRLMTQDYW). Topologically, residues 364–376 (ENLYQQTLRAAGK) are extracellular. The helical transmembrane segment at 377-402 (TYMIFFVVVIFLGSFYLINLILAVVA) threads the bilayer. At 403–745 (MAYEEQNQAN…CIYFIVMDPF (343 aa)) the chain is on the cytoplasmic side. The segment covering 461 to 471 (SSSETSKLSSK) has biased composition (low complexity). Disordered regions lie at residues 461–543 (SSSE…RGSL) and 565–611 (GSET…SPPM). Over residues 474 to 486 (KERRNRRKKKNQK) the composition is skewed to basic residues. Basic and acidic residues-rich tracts occupy residues 489–510 (SSGE…DSIR) and 573–585 (DEHS…ESRR). An II repeat occupies 726–989 (CSPYWIKFKK…EEDPDANNLQ (264 aa)). A helical membrane pass occupies residues 746-762 (VDLAITICIVLNTLFMA). Residues 763–771 (MEHHPMTEE) lie on the Extracellular side of the membrane. The helical transmembrane segment at 772–796 (FKNVLAIGNLVFTGIFAAEMVLKLI) threads the bilayer. At 797 to 805 (AMDPYEYFQ) the chain is on the cytoplasmic side. Residues 806–822 (VGWNIFDSLIVTLSLVE) form a helical membrane-spanning segment. Residues 823–831 (LFLADVEGL) are Extracellular-facing. The helical transmembrane segment at 832-848 (SVLRSFRLLRVFKLAKS) threads the bilayer. The Cytoplasmic portion of the chain corresponds to 849–865 (WPTLNMLIKIIGNSVGA). Residues 866–888 (LGNLTLVLAIIVFIFAVVGMQLF) traverse the membrane as a helical segment. Over 889–915 (GKSYKECVCKINDDCTLPRWHMNDFFH) the chain is Extracellular. Cysteine 897 and cysteine 903 are oxidised to a cystine. Residues 916–928 (SFLIVFRVLCGEW) constitute an intramembrane region (pore-forming). At 929-940 (IETMWDCMEVAG) the chain is on the extracellular side. An intrachain disulfide couples cysteine 935 to cysteine 944. A helical transmembrane segment spans residues 941–967 (QAMCLIVYMMVMVIGNLVVLNLFLALL). Residues 968-1187 (LSSFSSDNLT…WWNIRKTCYK (220 aa)) are Cytoplasmic-facing. The interval 1102-1148 (NAEELSSDSDSEYSKVRLNRSSSSECSTVDNPLPGEGEEAEAEPMNS) is disordered. Residues 1120-1131 (NRSSSSECSTVD) show a composition bias toward polar residues. Positions 1137–1148 (EGEEAEAEPMNS) are enriched in acidic residues. The stretch at 1180 to 1488 (NIRKTCYKIV…KKYYNAMKKL (309 aa)) is one III repeat. Residues 1188 to 1212 (IVEHSWFESFIVLMILLSSGALAFE) traverse the membrane as a helical segment. Residues 1213 to 1224 (DIYIERKKTIKI) are Extracellular-facing. A helical transmembrane segment spans residues 1225–1250 (ILEYADKIFTYIFILEMLLKWIAYGY). The Cytoplasmic segment spans residues 1251–1252 (KT). The chain crosses the membrane as a helical span at residues 1253 to 1278 (YFTNAWCWLDFLIVDVSLVTLVANTL). At 1279 to 1287 (GYSDLGPIK) the chain is on the extracellular side. Residues 1288–1304 (SLRTLRALRPLRALSRF) form a helical membrane-spanning segment. Residues 1305 to 1317 (EGMRVVVNALIGA) are Cytoplasmic-facing. Residues 1318–1342 (IPSIMNVLLVCLIFWLIFSIMGVNL) traverse the membrane as a helical segment. At 1343–1394 (FAGKFYECINTTDGSRFPASQVPNRSECFALMNVSQNVRWKNLKVNFDNVGL) the chain is on the extracellular side. An intrachain disulfide couples cysteine 1350 to cysteine 1370. N-linked (GlcNAc...) asparagine glycans are attached at residues asparagine 1352, asparagine 1366, and asparagine 1375. The pore-forming intramembrane region spans 1395–1405 (GYLSLLQVATF). The Extracellular segment spans residues 1406 to 1431 (KGWTIIMYAAVDSVNVDKQPKYEYSL). The chain crosses the membrane as a helical span at residues 1432 to 1457 (YMYIYFVVFIIFGSFFTLNLFIGVII). The Cytoplasmic segment spans residues 1458–1514 (DNFNQQKKKLGGQDIFMTEEQKKYYNAMKKLGSKKPQKPIPRPGNKIQGCIFDLVTN). Position 1490 is a phosphoserine; by PKC (serine 1490). The IV repeat unit spans residues 1497-1795 (IPRPGNKIQG…WEKFDPDATQ (299 aa)). Residues 1515-1534 (QAFDISIMVLICLNMVTMMV) form a helical membrane-spanning segment. At 1535–1545 (EKEGQSQHMTE) the chain is on the extracellular side. A helical transmembrane segment spans residues 1546–1567 (VLYWINVVFIILFTGECVLKLI). At 1568–1576 (SLRHYYFTV) the chain is on the cytoplasmic side. The chain crosses the membrane as a helical span at residues 1577–1598 (GWNIFDFVVVIISIVGMFLADL). Topologically, residues 1599–1607 (IETYFVSPT) are extracellular. Residues 1608–1627 (LFRVIRLARIGRILRLVKGA) traverse the membrane as a helical segment. Residues 1628–1640 (KGIRTLLFALMMS) lie on the Cytoplasmic side of the membrane. The chain crosses the membrane as a helical span at residues 1641 to 1663 (LPALFNIGLLLFLVMFIYAIFGM). The Extracellular portion of the chain corresponds to 1664 to 1686 (SNFAYVKKEDGINDMFNFETFGN). Residues 1687-1699 (SMICLFQITTSAG) constitute an intramembrane region (pore-forming). At 1700–1733 (WDGLLAPILNSKPPDCDPKKVHPGSSVEGDCGNP) the chain is on the extracellular side. The cysteines at positions 1715 and 1730 are disulfide-linked. Residues 1734–1759 (SVGIFYFVSYIIISFLVVVNMYIAVI) traverse the membrane as a helical segment. Over 1760–1988 (LENFSVATEE…KGKDSKESKK (229 aa)) the chain is Cytoplasmic. The region spanning 1889-1918 (EDVSATVIQRAYRRYRLRQNVKNISSIYIK) is the IQ domain. The interval 1934-1988 (FDNVNENSSPEKTDATSSTTSPPSYDSVTKPDKEKYEQDRTEKEDKGKDSKESKK) is disordered. Positions 1948–1961 (ATSSTTSPPSYDSV) are enriched in low complexity. Residues 1962 to 1988 (TKPDKEKYEQDRTEKEDKGKDSKESKK) show a composition bias toward basic and acidic residues.

This sequence belongs to the sodium channel (TC 1.A.1.10) family. Nav1.7/SCN9A subfamily. As to quaternary structure, the Nav1.7 voltage-gated sodium channel consists of an ion-conducting alpha subunit SCN9A which is functional on its own regulated by one or more beta-1 (SCN1B), beta-2 (SCN2B), beta-3 (SCN3B) and beta-4 (SCN4B) subunits. SCN1B and SCN3B are non-covalently associated with SCN9A. SCN2B and SCN4B are disulfide-linked to SCN9A. SCN1B regulates channel inactivation. Interacts with NEDD4 and NEDD4L; regulates Nav1.7 activity most probably through ubiquitination and subsequent endocytosis. Interacts with TMEM233; modulates the gating properties of NaV1.7. In terms of processing, phosphorylation at Ser-1490 by PKC in a highly conserved cytoplasmic loop increases peak sodium currents. Post-translationally, ubiquitinated by NEDD4L; which may promote its endocytosis. Expressed strongly in dorsal root ganglion, with only minor levels elsewhere in the body, smooth muscle cells, MTC cell line and C-cell carcinoma. Also expressed in vagus nerves within the head and neck region. Isoform 1 is expressed preferentially in the central and peripheral nervous system. Isoform 2 is expressed preferentially in the dorsal root ganglion.

It localises to the cell membrane. The protein resides in the cell projection. It is found in the neuron projection. Its subcellular location is the axon. The catalysed reaction is Na(+)(in) = Na(+)(out). Its activity is regulated as follows. Inhibited by tetrodotoxin. Weakly inhibited by saxitoxin. Inhibited by the spider huwentoxin-IV that binds the extracellular loop S3-S4 of repeat II. Inhibited by the spider protoxin-II that binds the extracellular loop S3-S4 of repeats II and IV. Inhibited by the scorpion alpha-toxins CvIV4 and AaH2. Inhibited by the conotoxin GVIIJ. Inhibited by the spider beta/delta-theraphotoxin-Pre1a. Pore-forming subunit of Nav1.7, a voltage-gated sodium (Nav) channel that directly mediates the depolarizing phase of action potentials in excitable membranes. Navs, also called VGSCs (voltage-gated sodium channels) or VDSCs (voltage-dependent sodium channels), operate by switching between closed and open conformations depending on the voltage difference across the membrane. In the open conformation they allow Na(+) ions to selectively pass through the pore, along their electrochemical gradient. The influx of Na(+) ions provokes membrane depolarization, initiating the propagation of electrical signals throughout cells and tissues. Nav1.7 plays a crucial role in controlling the excitability and action potential propagation from nociceptor neurons, thereby contributing to the sensory perception of pain. In Homo sapiens (Human), this protein is Sodium channel protein type 9 subunit alpha.